A 477-amino-acid polypeptide reads, in one-letter code: 3-succinoylsemialdehyde-pyridine dehydrogenase (477 aa).

202-208 contacts NAD(+); that stretch reads GDGPGVG. Active-site residues include Glu246 and Cys280.

It belongs to the aldehyde dehydrogenase family.

It catalyses the reaction 4-oxo-4-(pyridin-3-yl)butanal + NADP(+) + H2O = 4-oxo-4-(pyridin-3-yl)butanoate + NADPH + 2 H(+). It functions in the pathway alkaloid degradation; nicotine degradation. Functionally, catalyzes the dehydrogenation of 3-succinoylsemialdehyde-pyridine to 3-succinoyl-pyridine in the nicotine degradation pathway. The polypeptide is 3-succinoylsemialdehyde-pyridine dehydrogenase (ald) (Pseudomonas sp).